The sequence spans 372 residues: Ciliary neurotrophic factor receptor subunit alpha (372 aa).

A signal peptide spans 1 to 22; sequence MAAPVPWACCAVLAAAAAVVYA. The Ig-like C2-type domain occupies 27–104; the sequence is PQEAPHVQYE…WHLRHQVLLH (78 aa). C46 and C89 are joined by a disulfide. Residues N60, N70, N142, and N190 are each glycosylated (N-linked (GlcNAc...) asparagine). Fibronectin type-III domains lie at 108–205 and 206–306; these read PPRE…VKPD and PPEN…TEEP. Positions 290–294 match the WSXWS motif motif; that stretch reads WSDWS. Residues 301–340 are disordered; sequence PWTEEPRHLTTEAQAAETTTSTTSSLAPPPTTKICDPGEL. The span at 311–326 shows a compositional bias: low complexity; the sequence is TEAQAAETTTSTTSSL. Residue S342 is the site of GPI-anchor amidated serine attachment. The propeptide at 343-372 is removed in mature form; sequence GGGPSAPFLVSVPITLALAAAAATASSLLI.

The protein belongs to the type I cytokine receptor family. Type 3 subfamily. In terms of assembly, forms a heterotrimer with LIFR and IL6ST. Interacts with heterodimeric neurotropic cytokine composed of CLCF1/CLC and CRLF1/CLF-1. Either alone or in complex with the heterodimer CLCF1-CRLF1 interacts with SORL1; this interaction may promote internalization and lysosomal degradation. Component of a receptor complex composed of IL6ST/GP130, IL27RA/WSX1 and CNTFR which interacts with the neuroprotective peptide humanin. Nervous system and skeletal muscle.

The protein resides in the cell membrane. In terms of biological role, binds to CNTF. The alpha subunit provides the receptor specificity. Receptor for heterodimeric neurotropic cytokine composed of CLCF1/CLC and CRLF1/CLF-1. Acts as a receptor for the neuroprotective peptide humanin as part of a complex with IL6ST/GP130 and IL27RA/WSX1. In Homo sapiens (Human), this protein is Ciliary neurotrophic factor receptor subunit alpha (CNTFR).